We begin with the raw amino-acid sequence, 505 residues long: ATP synthase subunit alpha (505 aa).

ATP is bound at residue Gly-170–Thr-177.

The protein belongs to the ATPase alpha/beta chains family. F-type ATPases have 2 components, CF(1) - the catalytic core - and CF(0) - the membrane proton channel. CF(1) has five subunits: alpha(3), beta(3), gamma(1), delta(1), epsilon(1). CF(0) has four main subunits: a(1), b(1), b'(1) and c(9-12).

Its subcellular location is the cellular thylakoid membrane. The enzyme catalyses ATP + H2O + 4 H(+)(in) = ADP + phosphate + 5 H(+)(out). Its function is as follows. Produces ATP from ADP in the presence of a proton gradient across the membrane. The alpha chain is a regulatory subunit. The sequence is that of ATP synthase subunit alpha from Prochlorococcus marinus (strain MIT 9313).